The chain runs to 383 residues: Acetylornithine deacetylase (383 aa).

A Zn(2+)-binding site is contributed by H80. D82 is a catalytic residue. Residue D112 coordinates Zn(2+). The active site involves E144. Positions 145, 169, and 355 each coordinate Zn(2+).

It belongs to the peptidase M20A family. ArgE subfamily. In terms of assembly, homodimer. The cofactor is Zn(2+). Co(2+) serves as cofactor. Requires glutathione as cofactor.

Its subcellular location is the cytoplasm. It carries out the reaction N(2)-acetyl-L-ornithine + H2O = L-ornithine + acetate. Its pathway is amino-acid biosynthesis; L-arginine biosynthesis; L-ornithine from N(2)-acetyl-L-ornithine (linear): step 1/1. In terms of biological role, catalyzes the hydrolysis of the amide bond of N(2)-acetylated L-amino acids. Cleaves the acetyl group from N-acetyl-L-ornithine to form L-ornithine, an intermediate in L-arginine biosynthesis pathway, and a branchpoint in the synthesis of polyamines. This Escherichia coli O45:K1 (strain S88 / ExPEC) protein is Acetylornithine deacetylase.